Here is a 217-residue protein sequence, read N- to C-terminus: Probable GTP-binding protein EngB (217 aa).

An EngB-type G domain is found at 24 to 207 (SQPEICFAGR…HALIESWLIP (184 aa)). GTP-binding positions include 32–39 (GRSNAGKS), 59–63 (GRTQH), 81–84 (DLPG), 148–151 (TKCD), and 185–188 (LFSA). S39 and T61 together coordinate Mg(2+).

The protein belongs to the TRAFAC class TrmE-Era-EngA-EngB-Septin-like GTPase superfamily. EngB GTPase family. The cofactor is Mg(2+).

In terms of biological role, necessary for normal cell division and for the maintenance of normal septation. This is Probable GTP-binding protein EngB from Paraburkholderia xenovorans (strain LB400).